A 60-amino-acid chain; its full sequence is Mastoparan (60 aa).

An N-terminal signal peptide occupies residues 1–27 (MKDTILILFTAFIALLGFFGMSAEALA). AXPX repeat units lie at residues 27–30 (ADPL), 31–34 (ADPS), 35–38 (AGPN), and 41–44 (ADPE). Positions 28 to 45 (DPLADPSAGPNAEADPEA) are excised as a propeptide. At leucine 59 the chain carries Leucine amide.

Belongs to the MCD family. Mastoparan subfamily. As to expression, expressed by the venom gland.

It localises to the secreted. The protein resides in the target cell membrane. Its function is as follows. Mast cell degranulating peptide. Its mast cell degranulation activity may be related to the activation of G-protein coupled receptors in mast cells as well as interaction with other proteins located in cell endosomal membranes in the mast cells. Has a membranolytic activity on human glioblastoma multiforme cells (brain tumor cells) that leads to cell necrosis. In Vespa orientalis (Oriental hornet), this protein is Mastoparan.